The sequence spans 389 residues: MISSKGKYFFTSESVTEGHPDKVADQISDSILDAILAQDKDARVACETLVTTGMAFIAGEISTTGYADFQQIVRDTIREIGYVHSDMGFDADTCAVISSIDKQSVDIAQGVDRNTPESQGAGDQGMMFGFACKETEALMPAPIYYAHKLSRKLTEVRKDATLDYLRPDGKTEVAFEYLDGKPVRIADVVIAAQHDDGIEQGQIYEDIKREVVLASLPAEMIDDATKIYINTTGRFVIGGPMGDCGLTGRKIINDTYGGMGNHGGGAFSGKDPSKVDRSGAYMARYIAKNIVAAGLAERAEVQVAYAIGVAEPVSVLATSHGTGEVSDETLTKAVKEVFDLRPWYISERLDLRRPIYKPSACYGHFGRNNPNFTWERTDAVDDLRTACKI.

An ATP-binding site is contributed by His-19. Asp-21 contributes to the Mg(2+) binding site. Glu-47 serves as a coordination point for K(+). Residues Glu-60 and Gln-103 each coordinate L-methionine. The interval 103–113 is flexible loop; that stretch reads QSVDIAQGVDR. Residues 168–170, 234–235, Asp-243, 249–250, Ala-266, and Lys-270 contribute to the ATP site; these read DGK, RF, and RK. L-methionine is bound at residue Asp-243. Residue Lys-274 participates in L-methionine binding.

Belongs to the AdoMet synthase family. As to quaternary structure, homotetramer; dimer of dimers. The cofactor is Mg(2+). Requires K(+) as cofactor.

The protein localises to the cytoplasm. The enzyme catalyses L-methionine + ATP + H2O = S-adenosyl-L-methionine + phosphate + diphosphate. It functions in the pathway amino-acid biosynthesis; S-adenosyl-L-methionine biosynthesis; S-adenosyl-L-methionine from L-methionine: step 1/1. In terms of biological role, catalyzes the formation of S-adenosylmethionine (AdoMet) from methionine and ATP. The overall synthetic reaction is composed of two sequential steps, AdoMet formation and the subsequent tripolyphosphate hydrolysis which occurs prior to release of AdoMet from the enzyme. This chain is S-adenosylmethionine synthase, found in Maridesulfovibrio salexigens (strain ATCC 14822 / DSM 2638 / NCIMB 8403 / VKM B-1763) (Desulfovibrio salexigens).